The primary structure comprises 642 residues: Threonine--tRNA ligase (642 aa).

Residues methionine 1 to threonine 61 enclose the TGS domain. The interval aspartate 243–proline 534 is catalytic. Cysteine 334, histidine 385, and histidine 511 together coordinate Zn(2+).

The protein belongs to the class-II aminoacyl-tRNA synthetase family. Homodimer. Zn(2+) serves as cofactor.

It is found in the cytoplasm. The catalysed reaction is tRNA(Thr) + L-threonine + ATP = L-threonyl-tRNA(Thr) + AMP + diphosphate + H(+). Functionally, catalyzes the attachment of threonine to tRNA(Thr) in a two-step reaction: L-threonine is first activated by ATP to form Thr-AMP and then transferred to the acceptor end of tRNA(Thr). Also edits incorrectly charged L-seryl-tRNA(Thr). This is Threonine--tRNA ligase from Shewanella halifaxensis (strain HAW-EB4).